The chain runs to 122 residues: Large ribosomal subunit protein uL14 (122 aa).

The protein belongs to the universal ribosomal protein uL14 family. In terms of assembly, part of the 50S ribosomal subunit. Forms a cluster with proteins L3 and L19. In the 70S ribosome, L14 and L19 interact and together make contacts with the 16S rRNA in bridges B5 and B8.

Binds to 23S rRNA. Forms part of two intersubunit bridges in the 70S ribosome. The polypeptide is Large ribosomal subunit protein uL14 (Verminephrobacter eiseniae (strain EF01-2)).